The following is a 110-amino-acid chain: UPF0122 protein Aflv_1766 (110 aa).

This sequence belongs to the UPF0122 family.

In terms of biological role, might take part in the signal recognition particle (SRP) pathway. This is inferred from the conservation of its genetic proximity to ftsY/ffh. May be a regulatory protein. In Anoxybacillus flavithermus (strain DSM 21510 / WK1), this protein is UPF0122 protein Aflv_1766.